We begin with the raw amino-acid sequence, 274 residues long: Thiamine kinase (274 aa).

It belongs to the thiamine kinase family.

The catalysed reaction is thiamine + ATP = thiamine phosphate + ADP + H(+). Its pathway is cofactor biosynthesis; thiamine diphosphate biosynthesis; thiamine phosphate from thiamine: step 1/1. Functionally, catalyzes the ATP-dependent phosphorylation of thiamine to thiamine phosphate. Is involved in thiamine salvage. In Escherichia coli O81 (strain ED1a), this protein is Thiamine kinase.